The sequence spans 231 residues: Somatolactin-1 (231 aa).

The signal sequence occupies residues 1–24; it reads MRMIRAIKQGQWAVLLWPYLLTAS. Intrachain disulfides connect Cys-29–Cys-39, Cys-89–Cys-205, and Cys-222–Cys-230. Asn-145 is a glycosylation site (N-linked (GlcNAc...) asparagine).

This sequence belongs to the somatotropin/prolactin family. In terms of tissue distribution, pituitary gland.

The protein resides in the secreted. This chain is Somatolactin-1, found in Sparus aurata (Gilthead sea bream).